The chain runs to 477 residues: MLCATVSGPSFCEAKQQILKSLHLVDIIELRLDLINELDDQELHTLITTAQNPILTFRQHKEMSTALWIQKLYSLAKLEPKWMDIDVSLPKTALQTIRKSHPKIKLILSYHTDKNEDLDAIYNEMLATPAEIYKIVLSPENSSEALNYIKKARLLPKPSTVLCMGTHGLPSRVLSPLISNAMNYAAGISAPQVAPGQPKLEELLSYNYSKLSEKSHIYGLIGDPVDRSISHLSHNFLLSKLSLNATYIKFPVTIGEVVTFFSAIRDLPFSGLSVTMPLKTAIFDHVDALDASAQLCESINTLVFRNQKILGYNTDGEGVAKLLKQKNISVNNKHIAIVGAGGAAKAIAATLAMQGANLHIFNRTLSSAAALATCCKGKAYPLGSLENFKTIDIIINCLPPEVTFPWRFPPIVMDINTKPHPSPYLERAQKHGSLIIHGYEMFIEQALLQFALWFPDFLTPESCDSFRNYVKNFMAKV.

The 3-dehydroquinate dehydratase stretch occupies residues M1–S209. Residues S21, E29–R31, and T56–R58 contribute to the 3-dehydroquinate site. H111 serves as the catalytic Proton donor/acceptor; for 3-dehydroquinate dehydratase activity. K134 (schiff-base intermediate with substrate; for 3-dehydroquinate dehydratase activity) is an active-site residue. The 3-dehydroquinate site is built by R172 and Q197. The segment at K210–V477 is shikimate 5-dehydrogenase. S228–S230 is a binding site for shikimate. K279 serves as the catalytic Proton acceptor; for shikimate dehydrogenase activity. Residues N300 and D315 each contribute to the shikimate site. NADP(+)-binding positions include G339–A343, N362–T364, and G438. Q445 provides a ligand contact to shikimate.

This sequence in the N-terminal section; belongs to the type-I 3-dehydroquinase family. In the C-terminal section; belongs to the shikimate dehydrogenase family.

The catalysed reaction is 3-dehydroquinate = 3-dehydroshikimate + H2O. It catalyses the reaction shikimate + NADP(+) = 3-dehydroshikimate + NADPH + H(+). Its pathway is metabolic intermediate biosynthesis; chorismate biosynthesis; chorismate from D-erythrose 4-phosphate and phosphoenolpyruvate: step 3/7. The protein operates within metabolic intermediate biosynthesis; chorismate biosynthesis; chorismate from D-erythrose 4-phosphate and phosphoenolpyruvate: step 4/7. Bifunctional enzyme that catalyzes two sequential steps of the aromatic amino acids biosynthetic pathway. In the first reaction, the AroD domain catalyzes the cis-dehydration of 3-dehydroquinate (DHQ) and introduces the first double bond of the aromatic ring to yield 3-dehydroshikimate; in the second reaction, the AroE domain catalyzes the reversible NADPH linked reduction of 3-dehydroshikimate (DHSA) to yield shikimate (SA). In Chlamydia pneumoniae (Chlamydophila pneumoniae), this protein is Shikimate biosynthesis protein AroDE.